The sequence spans 511 residues: Pancreatic alpha-amylase (511 aa).

The signal sequence occupies residues 1-15; it reads MKFFLLLFTIGFCWA. At glutamine 16 the chain carries Pyrrolidone carboxylic acid. 3 disulfides stabilise this stretch: cysteine 43–cysteine 101, cysteine 85–cysteine 130, and cysteine 156–cysteine 175. Ca(2+)-binding residues include asparagine 115, arginine 173, and aspartate 182. Residue arginine 210 coordinates chloride. The active-site Nucleophile is aspartate 212. A Ca(2+)-binding site is contributed by histidine 216. Glutamate 248 functions as the Proton donor in the catalytic mechanism. Residues asparagine 313 and arginine 352 each coordinate chloride. Cystine bridges form between cysteine 393–cysteine 399 and cysteine 465–cysteine 477. An N-linked (GlcNAc...) asparagine glycan is attached at asparagine 476.

Belongs to the glycosyl hydrolase 13 family. In terms of assembly, monomer. Binds to the sea anemone inhibitor helianthamide. Requires Ca(2+) as cofactor. Chloride serves as cofactor. Detected in pancreas (at protein level).

Its subcellular location is the secreted. It is found in the extracellular space. It catalyses the reaction Endohydrolysis of (1-&gt;4)-alpha-D-glucosidic linkages in polysaccharides containing three or more (1-&gt;4)-alpha-linked D-glucose units.. This is Pancreatic alpha-amylase (AMY2A) from Homo sapiens (Human).